The following is a 137-amino-acid chain: Endoribonuclease YbeY (137 aa).

Residues His105, His109, and Asp115 each contribute to the Zn(2+) site.

This sequence belongs to the endoribonuclease YbeY family. Zn(2+) serves as cofactor.

The protein localises to the cytoplasm. Functionally, single strand-specific metallo-endoribonuclease involved in late-stage 70S ribosome quality control and in maturation of the 3' terminus of the 16S rRNA. The chain is Endoribonuclease YbeY from Chlorobaculum tepidum (strain ATCC 49652 / DSM 12025 / NBRC 103806 / TLS) (Chlorobium tepidum).